A 367-amino-acid chain; its full sequence is DNA replication and repair protein RecF (367 aa).

Residue 30–37 (GANGSGKT) participates in ATP binding.

It belongs to the RecF family.

Its subcellular location is the cytoplasm. Its function is as follows. The RecF protein is involved in DNA metabolism; it is required for DNA replication and normal SOS inducibility. RecF binds preferentially to single-stranded, linear DNA. It also seems to bind ATP. This chain is DNA replication and repair protein RecF, found in Pseudomonas putida (strain W619).